Consider the following 200-residue polypeptide: Recombination protein RecR (200 aa).

A C4-type zinc finger spans residues 57–72 (CERCRNYAQSTLCPVC). The Toprim domain maps to 80 to 175 (SLVCIVATPG…GVSRIAQGVP (96 aa)).

Belongs to the RecR family.

May play a role in DNA repair. It seems to be involved in an RecBC-independent recombinational process of DNA repair. It may act with RecF and RecO. The sequence is that of Recombination protein RecR from Alcanivorax borkumensis (strain ATCC 700651 / DSM 11573 / NCIMB 13689 / SK2).